The primary structure comprises 303 residues: Sulfate adenylyltransferase subunit 2 (303 aa).

The protein belongs to the PAPS reductase family. CysD subfamily. As to quaternary structure, heterodimer composed of CysD, the smaller subunit, and CysN.

The catalysed reaction is sulfate + ATP + H(+) = adenosine 5'-phosphosulfate + diphosphate. The protein operates within sulfur metabolism; hydrogen sulfide biosynthesis; sulfite from sulfate: step 1/3. In terms of biological role, with CysN forms the ATP sulfurylase (ATPS) that catalyzes the adenylation of sulfate producing adenosine 5'-phosphosulfate (APS) and diphosphate, the first enzymatic step in sulfur assimilation pathway. APS synthesis involves the formation of a high-energy phosphoric-sulfuric acid anhydride bond driven by GTP hydrolysis by CysN coupled to ATP hydrolysis by CysD. The polypeptide is Sulfate adenylyltransferase subunit 2 (Aliarcobacter butzleri (strain RM4018) (Arcobacter butzleri)).